The sequence spans 61 residues: Small ribosomal subunit protein uS14B (61 aa).

Residues cysteine 24, cysteine 27, cysteine 40, and cysteine 43 each coordinate Zn(2+).

The protein belongs to the universal ribosomal protein uS14 family. Zinc-binding uS14 subfamily. In terms of assembly, part of the 30S ribosomal subunit. Contacts proteins S3 and S10. Zn(2+) serves as cofactor.

Functionally, binds 16S rRNA, required for the assembly of 30S particles and may also be responsible for determining the conformation of the 16S rRNA at the A site. The chain is Small ribosomal subunit protein uS14B from Cutibacterium acnes (strain DSM 16379 / KPA171202) (Propionibacterium acnes).